The following is a 213-amino-acid chain: Dimethylamine corrinoid protein 3 (213 aa).

The B12-binding N-terminal domain occupies 1-91 (MADIEGLLHE…DLPAGAEKKL (91 aa)). Residues 92 to 213 (GVIVNGTVEG…AVAKAKELLL (122 aa)) form the B12-binding domain. H104 provides a ligand contact to methylcob(III)alamin.

It belongs to the methylamine corrinoid protein family.

It functions in the pathway one-carbon metabolism; methanogenesis from dimethylamine. Acts as a methyl group carrier between MtbB and MtbA. The protein is Dimethylamine corrinoid protein 3 (mtbC3) of Methanosarcina acetivorans (strain ATCC 35395 / DSM 2834 / JCM 12185 / C2A).